A 500-amino-acid chain; its full sequence is Probable malate:quinone oxidoreductase (500 aa).

It belongs to the MQO family. FAD is required as a cofactor.

It carries out the reaction (S)-malate + a quinone = a quinol + oxaloacetate. Its pathway is carbohydrate metabolism; tricarboxylic acid cycle; oxaloacetate from (S)-malate (quinone route): step 1/1. The chain is Probable malate:quinone oxidoreductase from Halalkalibacterium halodurans (strain ATCC BAA-125 / DSM 18197 / FERM 7344 / JCM 9153 / C-125) (Bacillus halodurans).